We begin with the raw amino-acid sequence, 149 residues long: 3-dehydroquinate dehydratase (149 aa).

Residue Y26 is the Proton acceptor of the active site. Substrate-binding residues include N78, H84, and D91. H104 acts as the Proton donor in catalysis. Substrate is bound by residues 105-106 (LS) and R115.

This sequence belongs to the type-II 3-dehydroquinase family. In terms of assembly, homododecamer.

The enzyme catalyses 3-dehydroquinate = 3-dehydroshikimate + H2O. The protein operates within metabolic intermediate biosynthesis; chorismate biosynthesis; chorismate from D-erythrose 4-phosphate and phosphoenolpyruvate: step 3/7. Catalyzes a trans-dehydration via an enolate intermediate. This is 3-dehydroquinate dehydratase from Polynucleobacter asymbioticus (strain DSM 18221 / CIP 109841 / QLW-P1DMWA-1) (Polynucleobacter necessarius subsp. asymbioticus).